Consider the following 84-residue polypeptide: AIFKSYCEIIVTHFPFDEQNCSMKLGTWTYDSSVVVINPESDQPDLSNFMESGEWVIKEARGWKHNVTYACCLTTHYLDITYHF.

C7 and C21 are oxidised to a cystine. N20 and N66 each carry an N-linked (GlcNAc...) asparagine glycan. Residues C71 and C72 are joined by a disulfide bond.

The protein belongs to the ligand-gated ion channel (TC 1.A.9) family. Acetylcholine receptor (TC 1.A.9.1) subfamily. Alpha-1/CHRNA1 sub-subfamily. In terms of assembly, one of the alpha chains that assemble within the acetylcholine receptor, a pentamer of two alpha chains, a beta, a delta, and a gamma (in immature muscle) or epsilon (in mature muscle) chains. The muscle heteropentamer composed of alpha-1, beta-1, delta, epsilon subunits interacts with the alpha-conotoxin ImII.

Its subcellular location is the postsynaptic cell membrane. It localises to the cell membrane. It carries out the reaction K(+)(in) = K(+)(out). The catalysed reaction is Na(+)(in) = Na(+)(out). Functionally, upon acetylcholine binding, the AChR responds by an extensive change in conformation that affects all subunits and leads to opening of an ion-conducting channel across the plasma membrane. This Herpestes ichneumon (Egyptian mongoose) protein is Acetylcholine receptor subunit alpha (CHRNA1).